The following is a 640-amino-acid chain: Threonine--tRNA ligase (640 aa).

The region spanning 1–59 is the TGS domain; sequence MKIKVKLPDGKEKEYDRGITPAEIAKELGIKKAIGAVVNGELWDLKRPIENDCELRLVT. A catalytic region spans residues 240-531; the sequence is DHRKLGPQLE…LIEHFAGAFP (292 aa). The Zn(2+) site is built by cysteine 332, histidine 383, and histidine 508.

This sequence belongs to the class-II aminoacyl-tRNA synthetase family. Homodimer. Zn(2+) serves as cofactor.

The protein resides in the cytoplasm. It catalyses the reaction tRNA(Thr) + L-threonine + ATP = L-threonyl-tRNA(Thr) + AMP + diphosphate + H(+). Functionally, catalyzes the attachment of threonine to tRNA(Thr) in a two-step reaction: L-threonine is first activated by ATP to form Thr-AMP and then transferred to the acceptor end of tRNA(Thr). Also edits incorrectly charged L-seryl-tRNA(Thr). In Thermotoga maritima (strain ATCC 43589 / DSM 3109 / JCM 10099 / NBRC 100826 / MSB8), this protein is Threonine--tRNA ligase.